A 563-amino-acid polypeptide reads, in one-letter code: Nicalin (563 aa).

The signal sequence occupies residues 1-29 (MQDEIIDFFRSPALLFYMTLMLTICVVNG). Residues 30-522 (SQQVGEVVET…NRLVAERVKP (493 aa)) lie on the Lumenal side of the membrane. N232 carries N-linked (GlcNAc...) asparagine glycosylation. A helical transmembrane segment spans residues 523–543 (AVFELVIAAGVFTYLSAFYYI). Topologically, residues 544-563 (ATHSQNTIEGTVAAIRKSIF) are cytoplasmic.

It belongs to the nicastrin family. In terms of assembly, may interact with the levamisole-sensitive nicotinic acetylcholine receptor (L-AChR). May interact with nra-4 in the ER. Expressed in body wall, pharyngeal, and vulval muscles, excretory canal cell, head and motor neurons, and vulval epithelium.

Its subcellular location is the endoplasmic reticulum membrane. In terms of biological role, involved in the recognition and selection of protein complexes to exit the endoplasmic reticulum (ER). In muscles, regulates levamisole-sensitive nicotinic acetylcholine receptor (L-AChR) subunit composition, possibly by allowing only specific L-AChR subunit combinations to exit the ER. Specifically, may promote the inclusion of alpha subunits unc-38 and unc-29 into L-AChR. Regulates L-AChR sensitivity to agonists such as nicotine and levamisole at neuro-muscular junctions. In touch neurons, may prevent ER exit of incorrectly folded mec-4-mec-10 ion channel. The chain is Nicalin from Caenorhabditis elegans.